The chain runs to 402 residues: Speedy protein E21 (402 aa).

The segment at 1–90 (MDRTETRFRK…EPEKELAPEP (90 aa)) is disordered. Polar residues predominate over residues 16-39 (GKITTSRQLHPQNEQSPQRSTSGY). The segment covering 76–90 (DESEEEPEKELAPEP) has biased composition (acidic residues).

The protein belongs to the Speedy/Ringo family.

The protein is Speedy protein E21 of Homo sapiens (Human).